We begin with the raw amino-acid sequence, 57 residues long: Large ribosomal subunit protein bL32 (57 aa).

The interval Met1 to Thr23 is disordered. The segment covering Ser9 to Tyr20 has biased composition (basic residues).

It belongs to the bacterial ribosomal protein bL32 family.

This chain is Large ribosomal subunit protein bL32, found in Lactococcus lactis subsp. cremoris (strain MG1363).